The chain runs to 36 residues: MPNERNIQNYHSTYNNIRDWLGYQKAGEEKAKSTIN.

This is an uncharacterized protein from Haemophilus influenzae (strain ATCC 51907 / DSM 11121 / KW20 / Rd).